Here is a 62-residue protein sequence, read N- to C-terminus: MALYITEECTYCGACEPECPTNAISAGSEIYVIDAASCNECAGFADSPACVAVCPAECIVQG.

2 consecutive 4Fe-4S ferredoxin-type domains span residues Ala2 to Ser28 and Glu29 to Gly62. Positions 9, 12, 15, 19, 38, 41, 50, and 54 each coordinate [4Fe-4S] cluster.

It depends on [4Fe-4S] cluster as a cofactor.

In terms of biological role, ferredoxins are iron-sulfur proteins that transfer electrons in a wide variety of metabolic reactions. This chain is Ferredoxin-1, found in Chlorobaculum tepidum (strain ATCC 49652 / DSM 12025 / NBRC 103806 / TLS) (Chlorobium tepidum).